Reading from the N-terminus, the 263-residue chain is H-2 class II histocompatibility antigen, A-S beta chain (263 aa).

Positions 1-27 (MALQIPSLLLSAAVVVLMVLSSPGTEG) are cleaved as a signal peptide. The beta-1 stretch occupies residues 28-120 (GDSERHFVFQ…VETHTSLRRL (93 aa)). Residues 28–224 (GDSERHFVFQ…RAQSESARSK (197 aa)) lie on the Extracellular side of the membrane. Intrachain disulfides connect Cys-42–Cys-104 and Cys-143–Cys-199. Asn-46 carries an N-linked (GlcNAc...) asparagine glycan. Positions 121–214 (EQPNVVISLS…SLKSPITVEW (94 aa)) are beta-2. The Ig-like C1-type domain occupies 123–211 (PNVVISLSRT…EHPSLKSPIT (89 aa)). A connecting peptide region spans residues 215-224 (RAQSESARSK). A helical membrane pass occupies residues 225-245 (MLSGIGGCVLGVIFLGLGLFI). The Cytoplasmic segment spans residues 246 to 263 (RHRSQKGPRGPPPAGLLQ).

The protein belongs to the MHC class II family. In terms of processing, ubiquitinated in immature dendritic cells leading to down-regulation of MHC class II.

Its subcellular location is the membrane. The chain is H-2 class II histocompatibility antigen, A-S beta chain (H2-Ab1) from Mus musculus (Mouse).